The chain runs to 312 residues: Olfactory receptor 2M5 (312 aa).

Over 1-25 the chain is Extracellular; it reads MAWENQTFNSDFILLGIFNHSPTHT. N-linked (GlcNAc...) asparagine glycosylation is present at asparagine 5. Residues 26-49 traverse the membrane as a helical segment; it reads FLFFLVLAIFSVAFMGNSVMVLLI. Topologically, residues 50–57 are cytoplasmic; it reads YLDTQLHT. A helical transmembrane segment spans residues 58–79; sequence PMYFLLSQLFLMDLMLICSTVP. At 80–100 the chain is on the extracellular side; the sequence is KMAFNYLSGSKSISMAGCATQ. A disulfide bridge connects residues cysteine 97 and cysteine 189. A helical membrane pass occupies residues 101–120; that stretch reads IFFYVSLLGSECFLLAVMSY. Residues 121-139 lie on the Cytoplasmic side of the membrane; it reads DRYIAICHPLRYTNLMRPK. Residues 140–158 traverse the membrane as a helical segment; the sequence is ICGLMTAFSWILGSMDAII. Residues 159 to 195 lie on the Extracellular side of the membrane; sequence DAVATFSFSYCGSREIAHFFCDFPSLLILSCNDTSIF. The chain crosses the membrane as a helical span at residues 196-219; that stretch reads EKVLFICCIVMIVFPVAIIIASYA. Residues 220–236 lie on the Cytoplasmic side of the membrane; that stretch reads RVILAVIHMGSGEGRRK. Residues 237–259 form a helical membrane-spanning segment; sequence AFTTCSSHLMVVGMYYGAGLFMY. Residues 260 to 272 are Extracellular-facing; it reads IRPTSDRSPMQDK. Residues 273 to 292 traverse the membrane as a helical segment; that stretch reads LVSVFYTILTPMLNPLIYSL. Topologically, residues 293 to 311 are cytoplasmic; sequence RNKEVTRALRKVLGKGKCG.

The protein belongs to the G-protein coupled receptor 1 family.

It localises to the cell membrane. Its function is as follows. Odorant receptor. The chain is Olfactory receptor 2M5 (OR2M5) from Homo sapiens (Human).